A 107-amino-acid polypeptide reads, in one-letter code: Large ribosomal subunit protein P2-A (107 aa).

The tract at residues 85-107 is disordered; the sequence is GAAAPAAAAEEEEDDDMGFGLFD.

This sequence belongs to the eukaryotic ribosomal protein P1/P2 family. As to quaternary structure, P1 and P2 exist as dimers at the large ribosomal subunit. In terms of processing, phosphorylated.

Its function is as follows. Plays an important role in the elongation step of protein synthesis. The sequence is that of Large ribosomal subunit protein P2-A from Trypanosoma cruzi.